The following is a 383-amino-acid chain: 4-hydroxy-3-methylbut-2-en-1-yl diphosphate synthase (flavodoxin) (383 aa).

4 residues coordinate [4Fe-4S] cluster: cysteine 275, cysteine 278, cysteine 310, and glutamate 317.

It belongs to the IspG family. Requires [4Fe-4S] cluster as cofactor.

The enzyme catalyses (2E)-4-hydroxy-3-methylbut-2-enyl diphosphate + oxidized [flavodoxin] + H2O + 2 H(+) = 2-C-methyl-D-erythritol 2,4-cyclic diphosphate + reduced [flavodoxin]. Its pathway is isoprenoid biosynthesis; isopentenyl diphosphate biosynthesis via DXP pathway; isopentenyl diphosphate from 1-deoxy-D-xylulose 5-phosphate: step 5/6. Its function is as follows. Converts 2C-methyl-D-erythritol 2,4-cyclodiphosphate (ME-2,4cPP) into 1-hydroxy-2-methyl-2-(E)-butenyl 4-diphosphate. The polypeptide is 4-hydroxy-3-methylbut-2-en-1-yl diphosphate synthase (flavodoxin) (Dinoroseobacter shibae (strain DSM 16493 / NCIMB 14021 / DFL 12)).